Consider the following 281-residue polypeptide: Ribosomal RNA small subunit methyltransferase A (281 aa).

6 residues coordinate S-adenosyl-L-methionine: asparagine 21, leucine 23, glycine 48, glutamate 69, aspartate 92, and asparagine 113.

Belongs to the class I-like SAM-binding methyltransferase superfamily. rRNA adenine N(6)-methyltransferase family. RsmA subfamily.

It is found in the cytoplasm. The catalysed reaction is adenosine(1518)/adenosine(1519) in 16S rRNA + 4 S-adenosyl-L-methionine = N(6)-dimethyladenosine(1518)/N(6)-dimethyladenosine(1519) in 16S rRNA + 4 S-adenosyl-L-homocysteine + 4 H(+). Functionally, specifically dimethylates two adjacent adenosines (A1518 and A1519) in the loop of a conserved hairpin near the 3'-end of 16S rRNA in the 30S particle. May play a critical role in biogenesis of 30S subunits. The chain is Ribosomal RNA small subunit methyltransferase A from Ralstonia nicotianae (strain ATCC BAA-1114 / GMI1000) (Ralstonia solanacearum).